The sequence spans 466 residues: 3-isopropylmalate dehydratase large subunit (466 aa).

The [4Fe-4S] cluster site is built by C347, C407, and C410.

Belongs to the aconitase/IPM isomerase family. LeuC type 1 subfamily. As to quaternary structure, heterodimer of LeuC and LeuD. It depends on [4Fe-4S] cluster as a cofactor.

The enzyme catalyses (2R,3S)-3-isopropylmalate = (2S)-2-isopropylmalate. Its pathway is amino-acid biosynthesis; L-leucine biosynthesis; L-leucine from 3-methyl-2-oxobutanoate: step 2/4. In terms of biological role, catalyzes the isomerization between 2-isopropylmalate and 3-isopropylmalate, via the formation of 2-isopropylmaleate. The protein is 3-isopropylmalate dehydratase large subunit of Vibrio vulnificus (strain CMCP6).